The sequence spans 282 residues: Undecaprenyl-diphosphatase (282 aa).

The next 5 membrane-spanning stretches (helical) occupy residues 96–116, 123–143, 198–218, 229–249, and 260–280; these read WMVI…KDII, MWIT…AEKW, FLLA…DAFA, QLAV…AWLL, and FAAY…TGML.

Belongs to the UppP family.

It is found in the cell membrane. The enzyme catalyses di-trans,octa-cis-undecaprenyl diphosphate + H2O = di-trans,octa-cis-undecaprenyl phosphate + phosphate + H(+). Catalyzes the dephosphorylation of undecaprenyl diphosphate (UPP). Confers resistance to bacitracin. The polypeptide is Undecaprenyl-diphosphatase (Corynebacterium diphtheriae (strain ATCC 700971 / NCTC 13129 / Biotype gravis)).